Here is a 320-residue protein sequence, read N- to C-terminus: Cytochrome f (320 aa).

Residues 1-35 (MQNRKTFSWVKEQMTRSIYVSIMIYVITRASISNA) form the signal peptide. Heme is bound by residues Tyr36, Cys56, Cys59, and His60. A helical transmembrane segment spans residues 286–306 (VQGLLFFLASVILAQIFLVLK).

This sequence belongs to the cytochrome f family. As to quaternary structure, the 4 large subunits of the cytochrome b6-f complex are cytochrome b6, subunit IV (17 kDa polypeptide, petD), cytochrome f and the Rieske protein, while the 4 small subunits are PetG, PetL, PetM and PetN. The complex functions as a dimer. Heme is required as a cofactor.

It localises to the plastid. It is found in the chloroplast thylakoid membrane. Component of the cytochrome b6-f complex, which mediates electron transfer between photosystem II (PSII) and photosystem I (PSI), cyclic electron flow around PSI, and state transitions. This Phalaenopsis aphrodite subsp. formosana (Moth orchid) protein is Cytochrome f.